Here is a 140-residue protein sequence, read N- to C-terminus: Large ribosomal subunit protein bL17 (140 aa).

This sequence belongs to the bacterial ribosomal protein bL17 family. In terms of assembly, part of the 50S ribosomal subunit. Contacts protein L32.

The sequence is that of Large ribosomal subunit protein bL17 from Gluconobacter oxydans (strain 621H) (Gluconobacter suboxydans).